The following is a 234-amino-acid chain: uncharacterized protein (234 aa).

Residues Val24–Thr83 form the HTH tetR-type domain. A DNA-binding region (H-T-H motif) is located at residues Ser46–Phe65.

This is an uncharacterized protein from Mycobacterium tuberculosis (strain CDC 1551 / Oshkosh).